Here is a 593-residue protein sequence, read N- to C-terminus: METETETPNGSTPCPTSAPSAIPLRPSSCDGTMGRHLARRLVEIGVRDVFSVPGDFNLTLLDHLIAEPELNLVGCCNELNAGYAADGYGRAKGVGACVVTFTVGGLSILNAIAGAYSENLPVICIVGGPNSNDYGTNRILHHTIGLPDFSQELQCFQTITCFQAVVNNLDDAHELIDTAISTALKESKPVYISIGCNLPAIPHPTFARDPVPFFLAPRVSNQAGLEAAVEEAAAFLNKAVKPVIVGGPKLRVAKAQKAFMEFAEASGYPIAVMPSGKGLVPENHPHFIGTYWGAVSTSYCGEIVESADAYVFVGPIFNDYSSVGYSLLIKKEKSLIVQPNRVTIGNGLSLGWVFMADFLTALAKKVKTNTTAVENYRRIYVPPGIPLKREKDEPLRVNVLFKHIQALISGDTAVIAETGDSWFNCQKLRLPENCGYEFQMQYGSIGWSVGATLGYAQAATDKRVIACIGDGSFQVTAQDISTMIRCGQRSIIFLINNGGYTIEVEIHDGPYNVIKNWDYTGFVSAIHNGQGKCWTAKVRTEEDLTEAIATATGAEKDSLCFIEVFAHKDDTSKELLEWGSRVAAANSRPPNPQ.

Residues 1–19 show a composition bias toward polar residues; the sequence is METETETPNGSTPCPTSAP. The disordered stretch occupies residues 1–20; it reads METETETPNGSTPCPTSAPS. 2 residues coordinate substrate: D55 and H142. The thiamine pyrophosphate binding stretch occupies residues 420-502; that stretch reads DSWFNCQKLR…FLINNGGYTI (83 aa). 3 residues coordinate Mg(2+): D470, N497, and G499. E503 is a binding site for substrate.

It belongs to the TPP enzyme family. In terms of assembly, homotetramer. It depends on a metal cation as a cofactor. Thiamine diphosphate is required as a cofactor.

The catalysed reaction is a 2-oxocarboxylate + H(+) = an aldehyde + CO2. The polypeptide is Pyruvate decarboxylase 1 (PDC1) (Pisum sativum (Garden pea)).